The sequence spans 469 residues: Adenosylhomocysteinase (469 aa).

T63, D139, and E164 together coordinate substrate. 165-167 (TTT) lines the NAD(+) pocket. 2 residues coordinate substrate: K194 and D198. Residues N199, 228–233 (GYGDVG), E251, N300, 321–323 (IGH), and N375 each bind NAD(+).

The protein belongs to the adenosylhomocysteinase family. Requires NAD(+) as cofactor.

The protein localises to the cytoplasm. The enzyme catalyses S-adenosyl-L-homocysteine + H2O = L-homocysteine + adenosine. Its pathway is amino-acid biosynthesis; L-homocysteine biosynthesis; L-homocysteine from S-adenosyl-L-homocysteine: step 1/1. In terms of biological role, may play a key role in the regulation of the intracellular concentration of adenosylhomocysteine. The polypeptide is Adenosylhomocysteinase (Pseudomonas aeruginosa (strain LESB58)).